Here is a 156-residue protein sequence, read N- to C-terminus: Snaclec A15 (156 aa).

The N-terminal stretch at 1-23 (MGRFIFVRFGLLVVFLSLSGTGA) is a signal peptide. Cystine bridges form between C27–C38, C55–C152, and C127–C144. Residues 34 to 153 (YDQHCYKAFD…CGDDYPFVCK (120 aa)) form the C-type lectin domain. An N-linked (GlcNAc...) asparagine glycan is attached at N141.

Belongs to the snaclec family. In terms of assembly, heterodimer; disulfide-linked. Expressed by the venom gland.

It is found in the secreted. Its function is as follows. Interferes with one step of hemostasis (modulation of platelet aggregation, or coagulation cascade, for example). This is Snaclec A15 from Macrovipera lebetinus (Levantine viper).